A 389-amino-acid chain; its full sequence is Probable tRNA sulfurtransferase (389 aa).

Residues 57–165 (DEALDRLSKI…EDETYIYHRV (109 aa)) form the THUMP domain. Residues 183–184 (LL), Lys267, Gly289, and Gln298 each bind ATP.

This sequence belongs to the ThiI family.

Its subcellular location is the cytoplasm. The catalysed reaction is [ThiI sulfur-carrier protein]-S-sulfanyl-L-cysteine + a uridine in tRNA + 2 reduced [2Fe-2S]-[ferredoxin] + ATP + H(+) = [ThiI sulfur-carrier protein]-L-cysteine + a 4-thiouridine in tRNA + 2 oxidized [2Fe-2S]-[ferredoxin] + AMP + diphosphate. It carries out the reaction [ThiS sulfur-carrier protein]-C-terminal Gly-Gly-AMP + S-sulfanyl-L-cysteinyl-[cysteine desulfurase] + AH2 = [ThiS sulfur-carrier protein]-C-terminal-Gly-aminoethanethioate + L-cysteinyl-[cysteine desulfurase] + A + AMP + 2 H(+). Its pathway is cofactor biosynthesis; thiamine diphosphate biosynthesis. In terms of biological role, catalyzes the ATP-dependent transfer of a sulfur to tRNA to produce 4-thiouridine in position 8 of tRNAs, which functions as a near-UV photosensor. Also catalyzes the transfer of sulfur to the sulfur carrier protein ThiS, forming ThiS-thiocarboxylate. This is a step in the synthesis of thiazole, in the thiamine biosynthesis pathway. The sulfur is donated as persulfide by IscS. This Methanothermobacter thermautotrophicus (strain ATCC 29096 / DSM 1053 / JCM 10044 / NBRC 100330 / Delta H) (Methanobacterium thermoautotrophicum) protein is Probable tRNA sulfurtransferase.